The following is a 188-amino-acid chain: Elongation factor P-like protein (188 aa).

It belongs to the elongation factor P family.

This Xanthomonas euvesicatoria pv. vesicatoria (strain 85-10) (Xanthomonas campestris pv. vesicatoria) protein is Elongation factor P-like protein.